A 123-amino-acid polypeptide reads, in one-letter code: Small ribosomal subunit protein uS12 (123 aa).

Asp-89 carries the post-translational modification 3-methylthioaspartic acid. The disordered stretch occupies residues 101 to 123 (SLDTSGVKDRKQGRSKYGAKRPK). Residues 113-123 (GRSKYGAKRPK) show a composition bias toward basic residues.

The protein belongs to the universal ribosomal protein uS12 family. In terms of assembly, part of the 30S ribosomal subunit. Contacts proteins S8 and S17. May interact with IF1 in the 30S initiation complex.

With S4 and S5 plays an important role in translational accuracy. Functionally, interacts with and stabilizes bases of the 16S rRNA that are involved in tRNA selection in the A site and with the mRNA backbone. Located at the interface of the 30S and 50S subunits, it traverses the body of the 30S subunit contacting proteins on the other side and probably holding the rRNA structure together. The combined cluster of proteins S8, S12 and S17 appears to hold together the shoulder and platform of the 30S subunit. In Azotobacter vinelandii (strain DJ / ATCC BAA-1303), this protein is Small ribosomal subunit protein uS12.